Consider the following 258-residue polypeptide: UPF0246 protein HI_0984 (258 aa).

It belongs to the UPF0246 family.

This is UPF0246 protein HI_0984 from Haemophilus influenzae (strain ATCC 51907 / DSM 11121 / KW20 / Rd).